The sequence spans 268 residues: Shikimate dehydrogenase (NADP(+)) (268 aa).

Threonine 62 serves as a coordination point for shikimate. The active-site Proton acceptor is the lysine 66. An NADP(+)-binding site is contributed by glutamate 78. The shikimate site is built by asparagine 87 and aspartate 102. Residues 126 to 130 (GSGGI) and leucine 207 each bind NADP(+). Tyrosine 209 is a shikimate binding site. Glycine 230 contacts NADP(+).

It belongs to the shikimate dehydrogenase family. As to quaternary structure, homodimer.

It carries out the reaction shikimate + NADP(+) = 3-dehydroshikimate + NADPH + H(+). It functions in the pathway metabolic intermediate biosynthesis; chorismate biosynthesis; chorismate from D-erythrose 4-phosphate and phosphoenolpyruvate: step 4/7. In terms of biological role, involved in the biosynthesis of the chorismate, which leads to the biosynthesis of aromatic amino acids. Catalyzes the reversible NADPH linked reduction of 3-dehydroshikimate (DHSA) to yield shikimate (SA). The polypeptide is Shikimate dehydrogenase (NADP(+)) (Thermoplasma acidophilum (strain ATCC 25905 / DSM 1728 / JCM 9062 / NBRC 15155 / AMRC-C165)).